The sequence spans 201 residues: Small ribosomal subunit protein uS4 (201 aa).

The disordered stretch occupies residues 26–45 (FEKRNYPPGQHGNNRRRGKK). Residues 93–153 (SRLDNVVYRM…EKSKSLAVVQ (61 aa)) form the S4 RNA-binding domain.

This sequence belongs to the universal ribosomal protein uS4 family. As to quaternary structure, part of the 30S ribosomal subunit. Contacts protein S5. The interaction surface between S4 and S5 is involved in control of translational fidelity.

Its function is as follows. One of the primary rRNA binding proteins, it binds directly to 16S rRNA where it nucleates assembly of the body of the 30S subunit. Functionally, with S5 and S12 plays an important role in translational accuracy. This chain is Small ribosomal subunit protein uS4, found in Christiangramia forsetii (strain DSM 17595 / CGMCC 1.15422 / KT0803) (Gramella forsetii).